Reading from the N-terminus, the 544-residue chain is Membrane protein insertase YidC (544 aa).

5 helical membrane-spanning segments follow: residues 6–26 (NILLIGLLFVSFLLWQQWQTD), 345–365 (LLMFFQSIVGNWGAAIILITL), 423–443 (GGCLPILLQMPIFIALYWVLL), 460–480 (LSVQDPYYVMPILMGVSMFVM), and 503–523 (VVFTVFFLWFPAGLVLYWLVG).

The protein belongs to the OXA1/ALB3/YidC family. Type 1 subfamily. In terms of assembly, interacts with the Sec translocase complex via SecD. Specifically interacts with transmembrane segments of nascent integral membrane proteins during membrane integration.

It is found in the cell inner membrane. Required for the insertion and/or proper folding and/or complex formation of integral membrane proteins into the membrane. Involved in integration of membrane proteins that insert both dependently and independently of the Sec translocase complex, as well as at least some lipoproteins. Aids folding of multispanning membrane proteins. This is Membrane protein insertase YidC from Shewanella woodyi (strain ATCC 51908 / MS32).